Consider the following 558-residue polypeptide: Kelch-like protein 23 (558 aa).

A BTB domain is found at 36–104; that stretch reads TDITLQCPSG…AYTSQIEITE (69 aa). Residues 139 to 240 form the BACK domain; that stretch reads CIGMHSFAEF…DPVYLKTALG (102 aa). Kelch repeat units follow at residues 274 to 320, 321 to 369, 370 to 416, 418 to 466, 467 to 508, and 510 to 557; these read TMYI…CLGP, NIYV…TLGG, CVYA…VLHD, IYVI…PLEN, KLYL…IMNG, and IYVT…CVYN.

The sequence is that of Kelch-like protein 23 (KLHL23) from Pongo abelii (Sumatran orangutan).